A 117-amino-acid chain; its full sequence is Immunoglobulin heavy variable 4-4 (117 aa).

Positions 1–19 (MKHLWFFLLLVAAPRWVLS) are cleaved as a signal peptide. The segment at 20–44 (QVQLQESGPGLVKPSGTLSLTCAVS) is framework-1. In terms of domain architecture, Ig-like spans 20 to 117 (QVQLQESGPG…ADTAVYYCAR (98 aa)). Cys41 and Cys115 are joined by a disulfide. Residues 45–53 (GGSISSSNW) form a complementarity-determining-1 region. The interval 54 to 70 (WSWVRQPPGKGLEWIGE) is framework-2. The segment at 71–77 (IYHSGST) is complementarity-determining-2. The framework-3 stretch occupies residues 78–115 (NYNPSLKSRVTISVDKSKNQFSLKLSSVTAADTAVYYC). The complementarity-determining-3 stretch occupies residues 116–117 (AR).

As to quaternary structure, immunoglobulins are composed of two identical heavy chains and two identical light chains; disulfide-linked.

The protein resides in the secreted. It is found in the cell membrane. Its function is as follows. V region of the variable domain of immunoglobulin heavy chains that participates in the antigen recognition. Immunoglobulins, also known as antibodies, are membrane-bound or secreted glycoproteins produced by B lymphocytes. In the recognition phase of humoral immunity, the membrane-bound immunoglobulins serve as receptors which, upon binding of a specific antigen, trigger the clonal expansion and differentiation of B lymphocytes into immunoglobulins-secreting plasma cells. Secreted immunoglobulins mediate the effector phase of humoral immunity, which results in the elimination of bound antigens. The antigen binding site is formed by the variable domain of one heavy chain, together with that of its associated light chain. Thus, each immunoglobulin has two antigen binding sites with remarkable affinity for a particular antigen. The variable domains are assembled by a process called V-(D)-J rearrangement and can then be subjected to somatic hypermutations which, after exposure to antigen and selection, allow affinity maturation for a particular antigen. The chain is Immunoglobulin heavy variable 4-4 from Homo sapiens (Human).